The chain runs to 863 residues: Probable beta-glucosidase A (863 aa).

The N-terminal stretch at 1–19 is a signal peptide; sequence MKLGWLEAAALTAASVASA. 3 N-linked (GlcNAc...) asparagine glycosylation sites follow: asparagine 65, asparagine 214, and asparagine 255. Residue aspartate 283 is part of the active site. Asparagine 318, asparagine 325, asparagine 357, asparagine 493, asparagine 526, asparagine 545, asparagine 567, asparagine 664, and asparagine 715 each carry an N-linked (GlcNAc...) asparagine glycan. The interval 720–754 is disordered; it reads KESSGDPNYGWDDEDYIPEGAKDGSPQDVLPSGGG.

The protein belongs to the glycosyl hydrolase 3 family.

Its subcellular location is the secreted. The enzyme catalyses Hydrolysis of terminal, non-reducing beta-D-glucosyl residues with release of beta-D-glucose.. The protein operates within glycan metabolism; cellulose degradation. Functionally, beta-glucosidases are one of a number of cellulolytic enzymes involved in the degradation of cellulosic biomass. Catalyzes the last step releasing glucose from the inhibitory cellobiose. The chain is Probable beta-glucosidase A (bglA) from Emericella nidulans (strain FGSC A4 / ATCC 38163 / CBS 112.46 / NRRL 194 / M139) (Aspergillus nidulans).